The sequence spans 193 residues: NADH-ubiquinone oxidoreductase chain 2 (193 aa).

5 helical membrane passes run 18-38, 39-59, 83-103, 116-138, and 161-181; these read FYST…KLGA, IFFL…FFLF, FFVL…GFFL, NLAF…LSTV, and LSFL…FFFL.

The protein resides in the mitochondrion inner membrane. It carries out the reaction a ubiquinone + NADH + 5 H(+)(in) = a ubiquinol + NAD(+) + 4 H(+)(out). Core subunit of the mitochondrial membrane respiratory chain NADH dehydrogenase (Complex I) that is believed to belong to the minimal assembly required for catalysis. Complex I functions in the transfer of electrons from NADH to the respiratory chain. The immediate electron acceptor for the enzyme is believed to be ubiquinone. This Paramecium tetraurelia protein is NADH-ubiquinone oxidoreductase chain 2 (ND2).